A 153-amino-acid chain; its full sequence is MAKKPYGEVTKDIVHIADVDLDGHKPIYVELRKVVGVNWMFAHAVCAALGIDKWRKIGSLSDEELEKLEDALRNPWKYGIPSWLYNRRRDPETGKDLHLVGNDYKITMEFDIKREMQINSWRGYRHREGLPVRGQRTRSHHRKGRTVGVIKKK.

A disordered region spans residues 132 to 153; sequence VRGQRTRSHHRKGRTVGVIKKK. Positions 135–153 are enriched in basic residues; sequence QRTRSHHRKGRTVGVIKKK.

The protein belongs to the universal ribosomal protein uS13 family. In terms of assembly, part of the 30S ribosomal subunit. Forms a loose heterodimer with protein S19. Forms two bridges to the 50S subunit in the 70S ribosome.

Its function is as follows. Located at the top of the head of the 30S subunit, it contacts several helices of the 16S rRNA. In the 70S ribosome it contacts the 23S rRNA (bridge B1a) and protein L5 of the 50S subunit (bridge B1b), connecting the 2 subunits; these bridges are implicated in subunit movement. This Nanoarchaeum equitans (strain Kin4-M) protein is Small ribosomal subunit protein uS13.